The sequence spans 114 residues: Dihydroneopterin monophosphate aldolase (114 aa).

Residues H15, H26, and H28 each coordinate Zn(2+).

The protein belongs to the PTPS family. It depends on Zn(2+) as a cofactor.

It carries out the reaction 7,8-dihydroneopterin 3'-phosphate = glycolaldehyde phosphate + 6-hydroxymethyl-7,8-dihydropterin. Catalyzes the conversion of 7,8-dihydroneopterin monophosphate (H2NMP) to 6-hydroxymethyl-7,8-dihydropterin (6-HMD). Cannot use 7,8-dihydroneopterin (H2Neo) or 7,8-dihydroneopterin triphosphate (H2NTP) as substrate. The polypeptide is Dihydroneopterin monophosphate aldolase (Pyrococcus furiosus (strain ATCC 43587 / DSM 3638 / JCM 8422 / Vc1)).